The primary structure comprises 230 residues: Cysteine S-methyltransferase OspZ (230 aa).

An interaction with host proteins TAB2, TAB3 and ZRANB3 region spans residues 49 to 52 (GITR). Positions 92, 98, 107, 111, 204, and 208 each coordinate S-adenosyl-L-methionine.

This sequence belongs to the NleE/OspZ family. In terms of assembly, monomer.

The protein resides in the secreted. It is found in the host cytoplasm. The protein localises to the host nucleus. The enzyme catalyses L-cysteinyl-[protein] + S-adenosyl-L-methionine = S-methyl-L-cysteinyl-[protein] + S-adenosyl-L-homocysteine + H(+). Cysteine methyltransferase effector that inhibits host cell NF-kappa-B activation by preventing nuclear translocation of host protein RELA/p65. Acts by mediating cysteine methylation of host proteins TAB2 and TAB3: methylation of a conserved cysteine residue of the RanBP2-type zinc finger (NZF) of TAB2 and TAB3 disrupts zinc-binding, thereby inactivating the ubiquitin chain-binding activity of TAB2 and TAB3, leading to NF-kappa-B inactivation. Also mediates cysteine methylation of host protein ZRANB3, inactivating its ability to bind ubiquitin chains. This chain is Cysteine S-methyltransferase OspZ, found in Shigella flexneri.